A 205-amino-acid chain; its full sequence is Holliday junction branch migration complex subunit RuvA (205 aa).

The interval Met-1 to Arg-64 is domain I. Residues Ser-65–Val-143 form a domain II region. Positions Arg-144–Ala-154 are flexible linker. The segment at Ala-154 to Lys-205 is domain III.

The protein belongs to the RuvA family. Homotetramer. Forms an RuvA(8)-RuvB(12)-Holliday junction (HJ) complex. HJ DNA is sandwiched between 2 RuvA tetramers; dsDNA enters through RuvA and exits via RuvB. An RuvB hexamer assembles on each DNA strand where it exits the tetramer. Each RuvB hexamer is contacted by two RuvA subunits (via domain III) on 2 adjacent RuvB subunits; this complex drives branch migration. In the full resolvosome a probable DNA-RuvA(4)-RuvB(12)-RuvC(2) complex forms which resolves the HJ.

The protein resides in the cytoplasm. Its function is as follows. The RuvA-RuvB-RuvC complex processes Holliday junction (HJ) DNA during genetic recombination and DNA repair, while the RuvA-RuvB complex plays an important role in the rescue of blocked DNA replication forks via replication fork reversal (RFR). RuvA specifically binds to HJ cruciform DNA, conferring on it an open structure. The RuvB hexamer acts as an ATP-dependent pump, pulling dsDNA into and through the RuvAB complex. HJ branch migration allows RuvC to scan DNA until it finds its consensus sequence, where it cleaves and resolves the cruciform DNA. This Bradyrhizobium sp. (strain ORS 278) protein is Holliday junction branch migration complex subunit RuvA.